Reading from the N-terminus, the 290-residue chain is Serpentine receptor class U-26 (290 aa).

7 helical membrane passes run 31-51, 70-90, 112-134, 158-178, 185-205, 213-233, and 262-282; these read LPMLFLLVPILYIPITIIIIL, LLSAISISQCMCLLFFLADFL, FITILTIFTYHINYSTMIFPFLV, FSIPFICVYPIIFTFFMFPAI, AYPFPFGAIIFRIERTFFGLV, NTLFWMTCCIITNFILLLLLI, and MIFSYLSNAMIVFLLLELHIV.

It belongs to the nematode receptor-like protein sru family.

The protein localises to the membrane. This is Serpentine receptor class U-26 (sru-26) from Caenorhabditis elegans.